The chain runs to 489 residues: Mitochondrial distribution and morphology protein 10 (489 aa).

This sequence belongs to the MDM10 family. Component of the ER-mitochondria encounter structure (ERMES) or MDM complex, composed of MMM1, MDM10, MDM12 and MDM34. Associates with the mitochondrial outer membrane sorting assembly machinery SAM(core) complex.

It is found in the mitochondrion outer membrane. Its function is as follows. Component of the ERMES/MDM complex, which serves as a molecular tether to connect the endoplasmic reticulum and mitochondria. Components of this complex are involved in the control of mitochondrial shape and protein biogenesis and may function in phospholipid exchange. MDM10 is involved in the late assembly steps of the general translocase of the mitochondrial outer membrane (TOM complex). Functions in the TOM40-specific route of the assembly of outer membrane beta-barrel proteins, including the association of TOM40 with the receptor TOM22 and small TOM proteins. Can associate with the SAM(core) complex as well as the MDM12-MMM1 complex, both involved in late steps of the major beta-barrel assembly pathway, that is responsible for biogenesis of all outer membrane beta-barrel proteins. May act as a switch that shuttles between both complexes and channels precursor proteins into the TOM40-specific pathway. Plays a role in mitochondrial morphology and in the inheritance of mitochondria. This Arthroderma otae (strain ATCC MYA-4605 / CBS 113480) (Microsporum canis) protein is Mitochondrial distribution and morphology protein 10.